The sequence spans 273 residues: Secretory carrier-associated membrane protein 6 (273 aa).

The interval 1–69 is disordered; sequence MHHDPNPFDE…MGDSKSKARE (69 aa). The Cytoplasmic segment spans residues 1-131; that stretch reads MHHDPNPFDE…LQKLQYLAFA (131 aa). Residues 20 to 30 are compositionally biased toward gly residues; it reads NGGGGGGGGGS. The stretch at 68–94 forms a coiled coil; the sequence is RELSSWETDLKRREADIKRREEALRNA. A run of 4 helical transmembrane segments spans residues 132 to 152, 159 to 179, 194 to 214, and 239 to 259; these read SWLGIVLCLSWNFIAVIVCWI, LFFLATIYALLGIPLSYLIWY, FGWFFLCYLIHIGFCIIAAIA, and IIGIFYFVGFALFCLETLLSI. Residues 260 to 273 lie on the Cytoplasmic side of the membrane; sequence GVLQRVYMYFRGNK.

The protein belongs to the SCAMP family.

The protein localises to the cell membrane. The protein resides in the cytoplasmic vesicle. It is found in the secretory vesicle membrane. Functionally, probably involved in membrane trafficking. The polypeptide is Secretory carrier-associated membrane protein 6 (SCAMP6) (Oryza sativa subsp. japonica (Rice)).